We begin with the raw amino-acid sequence, 162 residues long: CASP-like protein 1C1 (162 aa).

The Cytoplasmic segment spans residues 1–7 (MFSAKAR). Residues 8-28 (WIVAVVLRVAAAGAAAVAAVL) form a helical membrane-spanning segment. Residues 29–52 (MAMSHDEVIVYGMEVQAKFRYTPS) lie on the Extracellular side of the membrane. The chain crosses the membrane as a helical span at residues 53 to 73 (LVFFVAANAAVSACSLVVLLV). The Cytoplasmic segment spans residues 74 to 83 (PSSTSKLAAR). The chain crosses the membrane as a helical span at residues 84 to 104 (LLLMADVVLGMVLAGAFAAAG). The Extracellular segment spans residues 105 to 135 (AMAELGKNGNSHAGWIAICVQVPLFCDRVRS). Residues 136–156 (ALVAGSATIVLYYLMLMYSIY) traverse the membrane as a helical segment. Over 157 to 162 (TLPMFP) the chain is Cytoplasmic.

Belongs to the Casparian strip membrane proteins (CASP) family. As to quaternary structure, homodimer and heterodimers.

It localises to the cell membrane. The polypeptide is CASP-like protein 1C1 (Oryza sativa subsp. japonica (Rice)).